The chain runs to 38 residues: Alpha-amylase (38 aa).

It belongs to the glycosyl hydrolase 13 family. In terms of assembly, monomer. It depends on Ca(2+) as a cofactor. Chloride serves as cofactor. As to expression, expressed by the venom gland.

Its subcellular location is the secreted. It carries out the reaction Endohydrolysis of (1-&gt;4)-alpha-D-glucosidic linkages in polysaccharides containing three or more (1-&gt;4)-alpha-linked D-glucose units.. The sequence is that of Alpha-amylase from Tityus serrulatus (Brazilian scorpion).